A 710-amino-acid chain; its full sequence is Gastrulation-defective protein 3 (710 aa).

The helical transmembrane segment at 597-615 (AYYVFTVLALIISNFPTIV) threads the bilayer.

The protein localises to the membrane. The protein is Gastrulation-defective protein 3 (gadr-3) of Caenorhabditis elegans.